Reading from the N-terminus, the 344-residue chain is Palmitoyltransferase ZDHHC4 (344 aa).

Topologically, residues 1-2 are lumenal; that stretch reads MD. The helical transmembrane segment at 3-23 threads the bilayer; sequence FLVLFLFYLASVLMGLVLICV. Over 24–67 the chain is Cytoplasmic; sequence CSKTHSLKGLARGGAQIFSCIIPECLQRAVHGLLHYLFHTRNHT. A helical membrane pass occupies residues 68 to 88; that stretch reads FIVLHLVLQGMVYTEYTWEVF. Residues 89 to 99 lie on the Lumenal side of the membrane; sequence GYCQELELSLH. The helical transmembrane segment at 100–120 threads the bilayer; that stretch reads YLLLPYLLLGVNLFFFTLTCG. The Cytoplasmic segment spans residues 121–192; that stretch reads TNPGIITKAN…NNCIGAWNIR (72 aa). The DHHC domain maps to 149–199; it reads VRCSTCDLRKPARSKHCSVCNWCVHRFDHHCVWVNNCIGAWNIRYFLIYVL. C179 serves as the catalytic S-palmitoyl cysteine intermediate. The chain crosses the membrane as a helical span at residues 193–213; that stretch reads YFLIYVLTLTASAATVAIVST. Over 214-255 the chain is Lumenal; sequence TFLVHLVVMSDLYQETYIDDLGHLHVMDTVFLIQYLFLTFPR. Residues 256-276 traverse the membrane as a helical segment; sequence IVFMLGFVVVLSFLLGGYLLF. Residues 277–344 are Cytoplasmic-facing; it reads VLYLAATNQT…FPCHERKKQE (68 aa). The short motif at 341 to 344 is the Di-lysine motif element; sequence KKQE.

The protein belongs to the DHHC palmitoyltransferase family. In terms of assembly, interacts with CPT1A.

Its subcellular location is the endoplasmic reticulum membrane. It is found in the golgi apparatus membrane. The protein resides in the cell membrane. It catalyses the reaction L-cysteinyl-[protein] + hexadecanoyl-CoA = S-hexadecanoyl-L-cysteinyl-[protein] + CoA. In terms of biological role, palmitoyltransferase that catalyzes the addition of palmitate onto protein substrates including the D(2) dopamine receptor DRD2, GSK3B or MAVS. Mediates GSK3B palmitoylation to prevent its AKT1-mediated phosphorylation leading to activation of the STAT3 signaling pathway. Also catalyzes MAVS palmitoylation which promotes its stabilization and activation by inhibiting 'Lys-48'- but facilitating 'Lys-63'-linked ubiquitination. The polypeptide is Palmitoyltransferase ZDHHC4 (Homo sapiens (Human)).